We begin with the raw amino-acid sequence, 241 residues long: 2-C-methyl-D-erythritol 4-phosphate cytidylyltransferase (241 aa).

It belongs to the IspD/TarI cytidylyltransferase family. IspD subfamily. In terms of assembly, homodimer.

The catalysed reaction is 2-C-methyl-D-erythritol 4-phosphate + CTP + H(+) = 4-CDP-2-C-methyl-D-erythritol + diphosphate. Its pathway is isoprenoid biosynthesis; isopentenyl diphosphate biosynthesis via DXP pathway; isopentenyl diphosphate from 1-deoxy-D-xylulose 5-phosphate: step 2/6. Functionally, catalyzes the formation of 4-diphosphocytidyl-2-C-methyl-D-erythritol from CTP and 2-C-methyl-D-erythritol 4-phosphate (MEP). In Yersinia pseudotuberculosis serotype I (strain IP32953), this protein is 2-C-methyl-D-erythritol 4-phosphate cytidylyltransferase.